Here is a 407-residue protein sequence, read N- to C-terminus: Probable beta-1,3-galactosyltransferase 4 (407 aa).

A helical; Signal-anchor for type II membrane protein transmembrane segment spans residues 23–39 (WTLFLCIGFFCAGILFS).

The protein belongs to the glycosyltransferase 31 family. The cofactor is Mn(2+).

It localises to the golgi apparatus membrane. The protein operates within protein modification; protein glycosylation. Its function is as follows. Beta-1,3-galactosyltransferase that transfers galactose from UDP-galactose to substrates with a terminal glycosyl residue. This Arabidopsis thaliana (Mouse-ear cress) protein is Probable beta-1,3-galactosyltransferase 4 (B3GALT4).